The following is a 309-amino-acid chain: Minor serine/threonine-protein phosphatase PP2A-1 catalytic subunit (309 aa).

Mn(2+)-binding residues include D57, H59, D85, and N117. H118 functions as the Proton donor in the catalytic mechanism. H167 and H241 together coordinate Mn(2+). L309 is modified (leucine methyl ester).

This sequence belongs to the PPP phosphatase family. PP-2A subfamily. Mn(2+) serves as cofactor.

It catalyses the reaction O-phospho-L-seryl-[protein] + H2O = L-seryl-[protein] + phosphate. It carries out the reaction O-phospho-L-threonyl-[protein] + H2O = L-threonyl-[protein] + phosphate. Its function is as follows. Essential role in cell cycle control. PP2A may be involved in controlling the entry into mitosis, possibly acting as an inhibitor. The polypeptide is Minor serine/threonine-protein phosphatase PP2A-1 catalytic subunit (ppa1) (Schizosaccharomyces pombe (strain 972 / ATCC 24843) (Fission yeast)).